The following is a 234-amino-acid chain: Ribosomal RNA small subunit methyltransferase G (234 aa).

Residues Gly96, Leu101, 119 to 121 (DAT), 147 to 148 (VE), and Arg161 contribute to the S-adenosyl-L-methionine site.

It belongs to the methyltransferase superfamily. RNA methyltransferase RsmG family.

The protein localises to the cytoplasm. Functionally, specifically methylates the N7 position of a guanine in 16S rRNA. The sequence is that of Ribosomal RNA small subunit methyltransferase G from Chlorobium chlorochromatii (strain CaD3).